The chain runs to 323 residues: MSASSPAERRQRAQQLPPLRAEDDQAIQRFLDRLWAEQGVARQTLDSYRRDLEGLARWRDGAGGGLQGADRSALFDYLRWRTEARYAPRSNARLLSTLRGFYALCLRDGVRSDDPTALLDPPRLPRSLPKALTESQIDALLAAPEIGTPLGLRDRAMLELMYAAGLRVSELVTLPAVAINLRQGVLRVTGKGSKERLVPLGEESQHWLERYLETARPTLSERKAVPAVDGQVPLFIDAARRPLSRQQFWGLVKRYAAVAGIDPDTVSPHGLRHSFATHLLNHGADLRALQMLLGHSSLSTTQIYTLVARQHLQTLHARHHPRG.

In terms of domain architecture, Core-binding (CB) spans 21–106 (AEDDQAIQRF…TLRGFYALCL (86 aa)). Positions 127-317 (SLPKALTESQ…ARQHLQTLHA (191 aa)) constitute a Tyr recombinase domain. Active-site residues include Arg167, Lys191, His269, Arg272, and His295. Tyr304 functions as the O-(3'-phospho-DNA)-tyrosine intermediate in the catalytic mechanism.

It belongs to the 'phage' integrase family. XerD subfamily. As to quaternary structure, forms a cyclic heterotetrameric complex composed of two molecules of XerC and two molecules of XerD.

The protein resides in the cytoplasm. Functionally, site-specific tyrosine recombinase, which acts by catalyzing the cutting and rejoining of the recombining DNA molecules. The XerC-XerD complex is essential to convert dimers of the bacterial chromosome into monomers to permit their segregation at cell division. It also contributes to the segregational stability of plasmids. This chain is Tyrosine recombinase XerD, found in Xanthomonas campestris pv. campestris (strain ATCC 33913 / DSM 3586 / NCPPB 528 / LMG 568 / P 25).